The chain runs to 313 residues: MAGMRIIFMGTPEFACPTLQKLLDRGEDVIAVITQPDRPKGRGQQTLPPPVKVLAERHGIPVMQPLKVRVPEVVESIRSLAPDLIVVVAFGQILPKSLLDIPKYGCINVHASLLPRWRGAAPLNWCIINGETETGVTTMMMDVGLDTGDMLVKRSTPIDPDENTQSLHDRLSVVGAEALAETLDLLTAGKLVREKQDDALTCYAPMLKKEDGLIDWSKEPQTIKNLVRGMTPWPGAFSFLDGKMLKIYRVGTAGGEGTPGSVIRAGREGLEVACSGGSIVIEELQLEGKKRLHAGDFLAGYKIAPGSILGKKD.

112-115 (SLLP) contacts (6S)-5,6,7,8-tetrahydrofolate.

Belongs to the Fmt family.

The enzyme catalyses L-methionyl-tRNA(fMet) + (6R)-10-formyltetrahydrofolate = N-formyl-L-methionyl-tRNA(fMet) + (6S)-5,6,7,8-tetrahydrofolate + H(+). In terms of biological role, attaches a formyl group to the free amino group of methionyl-tRNA(fMet). The formyl group appears to play a dual role in the initiator identity of N-formylmethionyl-tRNA by promoting its recognition by IF2 and preventing the misappropriation of this tRNA by the elongation apparatus. In Geotalea uraniireducens (strain Rf4) (Geobacter uraniireducens), this protein is Methionyl-tRNA formyltransferase.